The chain runs to 302 residues: Pantothenate synthetase 4 (302 aa).

Residue 51–58 (MGALHEGH) coordinates ATP. Residue His58 is the Proton donor of the active site. Gln82 is a (R)-pantoate binding site. Gln82 serves as a coordination point for beta-alanine. 166-169 (GRKD) provides a ligand contact to ATP. Position 172 (Gln172) interacts with (R)-pantoate. ATP-binding positions include Ala195 and 203-206 (RSSR).

This sequence belongs to the pantothenate synthetase family. As to quaternary structure, homodimer.

The protein localises to the cytoplasm. The catalysed reaction is (R)-pantoate + beta-alanine + ATP = (R)-pantothenate + AMP + diphosphate + H(+). Its pathway is cofactor biosynthesis; (R)-pantothenate biosynthesis; (R)-pantothenate from (R)-pantoate and beta-alanine: step 1/1. Catalyzes the condensation of pantoate with beta-alanine in an ATP-dependent reaction via a pantoyl-adenylate intermediate. In Frankia alni (strain DSM 45986 / CECT 9034 / ACN14a), this protein is Pantothenate synthetase 4.